Here is a 360-residue protein sequence, read N- to C-terminus: MAPLGTTVLLWSLLRSSPGVERVCFRARIQPWHGGLLQPLPCSFEMGLPRRRFSSEAAESGSPETKKPTFMDEEVQSILTKMTGLNLQKTFKPAIQELKPPTYKLMTQAQLEEATRQAVEAAKVRLKMPPVLEERVPINDVLAEDKILEGTETTKYVFTDISYSIPHRERFIVVREPSGTLRKASWEERDRMIQVYFPKEGRKILTPIIFKEENLRTMYSQDRHVDVLNLCFAQFEPDSTEYIKVHHKTYEDIDKRGKYDLLRSTRYFGGMVWYFVNNKKIDGLLIDQIQRDLIDDATNLVQLYHVLHPDGQSAQGAKDQAAEGINLIKVFAKTEAQKGAYIELTLQTYQEALSRHSAAS.

S54 bears the Phosphoserine mark. K211 bears the N6-acetyllysine mark.

The protein belongs to the mitochondrion-specific ribosomal protein mS22 family. Component of the mitochondrial small ribosomal subunit (mt-SSU). Mature mammalian 55S mitochondrial ribosomes consist of a small (28S) and a large (39S) subunit. The 28S small subunit contains a 12S ribosomal RNA (12S mt-rRNA) and 30 different proteins. The 39S large subunit contains a 16S rRNA (16S mt-rRNA), a copy of mitochondrial valine transfer RNA (mt-tRNA(Val)), which plays an integral structural role, and 52 different proteins.

The protein resides in the mitochondrion. This Homo sapiens (Human) protein is Small ribosomal subunit protein mS22 (MRPS22).